A 249-amino-acid polypeptide reads, in one-letter code: 2,3-bisphosphoglycerate-dependent phosphoglycerate mutase (249 aa).

Substrate-binding positions include 8–15 (RHGESTWN), 21–22 (TG), Arg-60, 87–90 (ERHY), Lys-98, 114–115 (RR), and 183–184 (GN). His-9 serves as the catalytic Tele-phosphohistidine intermediate. Glu-87 serves as the catalytic Proton donor/acceptor.

Belongs to the phosphoglycerate mutase family. BPG-dependent PGAM subfamily. As to quaternary structure, homodimer.

It carries out the reaction (2R)-2-phosphoglycerate = (2R)-3-phosphoglycerate. It participates in carbohydrate degradation; glycolysis; pyruvate from D-glyceraldehyde 3-phosphate: step 3/5. Functionally, catalyzes the interconversion of 2-phosphoglycerate and 3-phosphoglycerate. In Burkholderia mallei (strain NCTC 10247), this protein is 2,3-bisphosphoglycerate-dependent phosphoglycerate mutase.